We begin with the raw amino-acid sequence, 109 residues long: Parvalbumin beta-1 (109 aa).

S2 carries the N-acetylserine modification. EF-hand domains follow at residues 39–74 (KSHEEVKKAFFVIDQDQSGFIEEDELKLFLQTFGAG) and 78–109 (LTAAETKAFLAAGDEDGDGMIGVDEFVTLVKA). Positions 52, 54, 56, 58, 60, 63, 91, 93, 95, 97, and 102 each coordinate Ca(2+).

It belongs to the parvalbumin family.

In muscle, parvalbumin is thought to be involved in relaxation after contraction. It binds two calcium ions. This is Parvalbumin beta-1 from Gadus chalcogrammus (Alaska pollock).